Here is a 521-residue protein sequence, read N- to C-terminus: NADH-quinone oxidoreductase subunit N (521 aa).

Helical transmembrane passes span 15 to 35 (LAPE…DLIL), 43 to 63 (IIGW…IWRM), 98 to 118 (LLKI…LGST), 128 to 148 (AEFY…ASSG), 150 to 170 (LVTL…LVGL), 185 to 205 (VVTG…LYGV), 227 to 247 (ALVY…IAAA), 261 to 281 (PTPV…AAVF), 303 to 323 (VFFA…VSAL), 331 to 351 (LLAL…AISV), 363 to 383 (VFYL…VTVI), 406 to 426 (AAAM…AGFF), 442 to 462 (WLVA…FGII), and 485 to 505 (TVIW…GPLM).

It belongs to the complex I subunit 2 family. As to quaternary structure, NDH-1 is composed of 14 different subunits. Subunits NuoA, H, J, K, L, M, N constitute the membrane sector of the complex.

It is found in the cell membrane. The catalysed reaction is a quinone + NADH + 5 H(+)(in) = a quinol + NAD(+) + 4 H(+)(out). Its function is as follows. NDH-1 shuttles electrons from NADH, via FMN and iron-sulfur (Fe-S) centers, to quinones in the respiratory chain. The immediate electron acceptor for the enzyme in this species is believed to be a menaquinone. Couples the redox reaction to proton translocation (for every two electrons transferred, four hydrogen ions are translocated across the cytoplasmic membrane), and thus conserves the redox energy in a proton gradient. The chain is NADH-quinone oxidoreductase subunit N from Paenibacillus sp. (strain JDR-2).